Consider the following 880-residue polypeptide: DNA mismatch repair protein MutS (880 aa).

An ATP-binding site is contributed by 631 to 638 (GPNMAGKS). Residues 835 to 860 (RAAPPPPAPAAPKTSPVEERLREIQP) form a disordered region. Basic and acidic residues predominate over residues 850-860 (PVEERLREIQP).

It belongs to the DNA mismatch repair MutS family.

Functionally, this protein is involved in the repair of mismatches in DNA. It is possible that it carries out the mismatch recognition step. This protein has a weak ATPase activity. The protein is DNA mismatch repair protein MutS of Cereibacter sphaeroides (strain ATCC 17029 / ATH 2.4.9) (Rhodobacter sphaeroides).